Reading from the N-terminus, the 457-residue chain is Bifunctional protein GlmU (457 aa).

The pyrophosphorylase stretch occupies residues 1–230; that stretch reads MPLSLPLHIV…AQEVEGVNDL (230 aa). Residues 12 to 15, lysine 26, glutamine 78, 83 to 84, 105 to 107, glycine 140, glutamate 155, asparagine 170, and asparagine 228 contribute to the UDP-N-acetyl-alpha-D-glucosamine site; these read LAAG, GT, and YGD. Mg(2+) is bound at residue aspartate 107. Asparagine 228 is a Mg(2+) binding site. The segment at 231–251 is linker; that stretch reads WQLTQLERAWQIRAARALCLQ. The segment at 252–457 is N-acetyltransferase; it reads GARVADPARL…DGWQRPKKKT (206 aa). Positions 334 and 352 each coordinate UDP-N-acetyl-alpha-D-glucosamine. Residue histidine 364 is the Proton acceptor of the active site. UDP-N-acetyl-alpha-D-glucosamine-binding residues include tyrosine 367 and asparagine 378. Acetyl-CoA is bound by residues alanine 381, 387–388, serine 406, alanine 424, and arginine 441; that span reads NY.

In the N-terminal section; belongs to the N-acetylglucosamine-1-phosphate uridyltransferase family. The protein in the C-terminal section; belongs to the transferase hexapeptide repeat family. In terms of assembly, homotrimer. It depends on Mg(2+) as a cofactor.

It is found in the cytoplasm. It carries out the reaction alpha-D-glucosamine 1-phosphate + acetyl-CoA = N-acetyl-alpha-D-glucosamine 1-phosphate + CoA + H(+). The enzyme catalyses N-acetyl-alpha-D-glucosamine 1-phosphate + UTP + H(+) = UDP-N-acetyl-alpha-D-glucosamine + diphosphate. Its pathway is nucleotide-sugar biosynthesis; UDP-N-acetyl-alpha-D-glucosamine biosynthesis; N-acetyl-alpha-D-glucosamine 1-phosphate from alpha-D-glucosamine 6-phosphate (route II): step 2/2. The protein operates within nucleotide-sugar biosynthesis; UDP-N-acetyl-alpha-D-glucosamine biosynthesis; UDP-N-acetyl-alpha-D-glucosamine from N-acetyl-alpha-D-glucosamine 1-phosphate: step 1/1. It participates in bacterial outer membrane biogenesis; LPS lipid A biosynthesis. Functionally, catalyzes the last two sequential reactions in the de novo biosynthetic pathway for UDP-N-acetylglucosamine (UDP-GlcNAc). The C-terminal domain catalyzes the transfer of acetyl group from acetyl coenzyme A to glucosamine-1-phosphate (GlcN-1-P) to produce N-acetylglucosamine-1-phosphate (GlcNAc-1-P), which is converted into UDP-GlcNAc by the transfer of uridine 5-monophosphate (from uridine 5-triphosphate), a reaction catalyzed by the N-terminal domain. This chain is Bifunctional protein GlmU, found in Xylella fastidiosa (strain M23).